The primary structure comprises 243 residues: Purine nucleoside phosphorylase YfiH (243 aa).

Positions 71, 107, and 124 each coordinate Zn(2+).

Belongs to the purine nucleoside phosphorylase YfiH/LACC1 family. In terms of assembly, homodimer. The cofactor is Cu(2+). Requires Zn(2+) as cofactor.

The catalysed reaction is adenosine + phosphate = alpha-D-ribose 1-phosphate + adenine. The enzyme catalyses S-methyl-5'-thioadenosine + phosphate = 5-(methylsulfanyl)-alpha-D-ribose 1-phosphate + adenine. It catalyses the reaction inosine + phosphate = alpha-D-ribose 1-phosphate + hypoxanthine. It carries out the reaction adenosine + H2O + H(+) = inosine + NH4(+). Its function is as follows. Purine nucleoside enzyme that catalyzes the phosphorolysis of adenosine and inosine nucleosides, yielding D-ribose 1-phosphate and the respective free bases, adenine and hypoxanthine. Also catalyzes the phosphorolysis of S-methyl-5'-thioadenosine into adenine and S-methyl-5-thio-alpha-D-ribose 1-phosphate. Also has adenosine deaminase activity. May also act as a polyphenol oxidase: able to oxidize syringaldazine and 2,2'-azino-bis(3-ethylbenzthiazoline-6-sulfonic acid) (ABTS) in vitro. This chain is Purine nucleoside phosphorylase YfiH, found in Escherichia coli (strain K12).